A 396-amino-acid chain; its full sequence is Methylthioribose kinase (396 aa).

ATP-binding positions include Asn-44, Lys-61, and 115-117; that span reads EDL. Asp-233 lines the substrate pocket. 250 to 252 contributes to the ATP binding site; it reads DPE. Arg-340 lines the substrate pocket.

This sequence belongs to the methylthioribose kinase family. Homodimer.

It catalyses the reaction 5-(methylsulfanyl)-D-ribose + ATP = 5-(methylsulfanyl)-alpha-D-ribose 1-phosphate + ADP + H(+). It participates in amino-acid biosynthesis; L-methionine biosynthesis via salvage pathway; S-methyl-5-thio-alpha-D-ribose 1-phosphate from S-methyl-5'-thioadenosine (hydrolase route): step 2/2. In terms of biological role, catalyzes the phosphorylation of methylthioribose into methylthioribose-1-phosphate. The chain is Methylthioribose kinase from Geobacillus kaustophilus (strain HTA426).